We begin with the raw amino-acid sequence, 1314 residues long: Enfumafungin synthase efuA (1314 aa).

Residues 1–680 are terpenne cyclase; the sequence is MPSYHNTDKT…RYIDKASRQG (680 aa). PFTB repeat units lie at residues 19-62 and 66-107; these read LQQA…ELSL and GPEI…RILG. Helical transmembrane passes span 133 to 153, 155 to 175, and 230 to 250; these read FFTR…IPQM, AELI…SSWA, and YQWI…FGGL. The PFTB 3 repeat unit spans residues 260–300; it reads LKRCTAWLLEHQEESGDWAGFFPPIHGSIWALLLDGFSFQS. The active-site Proton donor is Asp-395. PFTB repeat units follow at residues 417-458 and 546-597; these read VMNG…DSLV and CMRT…LRFR. Residues 681 to 1314 are glycosyltransferase; it reads IETLRIPSSS…ADSVLDIEEK (634 aa). The chain crosses the membrane as a helical span at residues 1200-1220; that stretch reads AIVQLLYGFTTTILALFGWLK. A disordered region spans residues 1289–1314; sequence DSGASESSRSSLDGGHADSVLDIEEK. Low complexity predominate over residues 1292 to 1302; it reads ASESSRSSLDG.

In the N-terminal section; belongs to the terpene cyclase/mutase family. This sequence in the C-terminal section; belongs to the glycosyltransferase 28 family.

The protein localises to the membrane. The protein operates within secondary metabolite biosynthesis; terpenoid biosynthesis. In terms of biological role, terpene cyclase-glycosyl transferase fusion protein; part of the gene cluster that mediates the biosynthesis of enfumafungin, a glycosylated fernene-type triterpenoid with potent antifungal activity, mediated by its interaction with beta-1,3-glucan synthase and the fungal cell wall. The pathway begins with the terpene cyclase-glycosyl transferase fusion protein that most likely uses 2,3-oxidosqualene as substrate and catalyzes glycosylation immediately after cyclization. The fernene glycoside then could be processed by the desaturase efuI which catalyzes isomerization of a double bond established by efuA to form the core structure. The latter would then undergo a series of hydroxylations in unknown order at C-2, C-19, C-23 and C-25, which would be catalyzed by two of the three cytochrome P450 monooxygenases efuB, efuG or efuH. The hydroxy-group at C-25 becomes oxidized by the dehydrogenase efuE to enable a spontaneous, non-enzymatic hemiacetal formation with C-23. After hydroxylation at C-2, acetylation by the acetyltransferase efuC takes place. The final steps in enfumafungin biosynthesis require expansion of the 5-membered ring by lactonization via a Baeyer-Villiger reaction mediated by one of the BGC's cytochrome P450 monooxygenases (efuB, efuG or efuH) followed by ring cleavage. This type of reaction would establish a double bond between C-20 and C-21 which could be reduced by the reductase efuL to form the final product. This is Enfumafungin synthase efuA from Hormonema carpetanum.